Here is a 389-residue protein sequence, read N- to C-terminus: Succinate--CoA ligase [ADP-forming] subunit beta (389 aa).

Residues K46, 53–55 (GRG), E99, C102, and E107 contribute to the ATP site. Mg(2+) is bound by residues N199 and D213. Residues N264 and 321–323 (GIV) contribute to the substrate site.

This sequence belongs to the succinate/malate CoA ligase beta subunit family. In terms of assembly, heterotetramer of two alpha and two beta subunits. Mg(2+) is required as a cofactor.

The enzyme catalyses succinate + ATP + CoA = succinyl-CoA + ADP + phosphate. It catalyses the reaction GTP + succinate + CoA = succinyl-CoA + GDP + phosphate. It participates in carbohydrate metabolism; tricarboxylic acid cycle; succinate from succinyl-CoA (ligase route): step 1/1. In terms of biological role, succinyl-CoA synthetase functions in the citric acid cycle (TCA), coupling the hydrolysis of succinyl-CoA to the synthesis of either ATP or GTP and thus represents the only step of substrate-level phosphorylation in the TCA. The beta subunit provides nucleotide specificity of the enzyme and binds the substrate succinate, while the binding sites for coenzyme A and phosphate are found in the alpha subunit. The chain is Succinate--CoA ligase [ADP-forming] subunit beta from Haemophilus influenzae (strain PittEE).